Reading from the N-terminus, the 270-residue chain is 3-phenylpropionate-dihydrodiol/cinnamic acid-dihydrodiol dehydrogenase (270 aa).

10–34 (FITGGGSGLGLALVERFIEEGAQVA) is an NAD(+) binding site. Serine 143 is a substrate binding site. The active-site Proton acceptor is tyrosine 156.

It belongs to the short-chain dehydrogenases/reductases (SDR) family.

The enzyme catalyses 3-(cis-5,6-dihydroxycyclohexa-1,3-dien-1-yl)propanoate + NAD(+) = 3-(2,3-dihydroxyphenyl)propanoate + NADH + H(+). It catalyses the reaction (2E)-3-(cis-5,6-dihydroxycyclohexa-1,3-dien-1-yl)prop-2-enoate + NAD(+) = (2E)-3-(2,3-dihydroxyphenyl)prop-2-enoate + NADH + H(+). The protein operates within aromatic compound metabolism; 3-phenylpropanoate degradation. Converts 3-phenylpropionate-dihydrodiol (PP-dihydrodiol) and cinnamic acid-dihydrodiol (CI-dihydrodiol) into 3-(2,3-dihydroxylphenyl)propanoic acid (DHPP) and 2,3-dihydroxicinnamic acid (DHCI), respectively. The polypeptide is 3-phenylpropionate-dihydrodiol/cinnamic acid-dihydrodiol dehydrogenase (Escherichia coli (strain SMS-3-5 / SECEC)).